Reading from the N-terminus, the 660-residue chain is Protein NEDD1 (660 aa).

WD repeat units lie at residues 1–31 (MQEN…FNPH), 32–71 (TSPH…PVPL), 75–114 (AEGQ…VHRS), 117–156 (DHKD…SSTP), 160–200 (GSNQ…PYHN), 204–244 (VHKA…LVKT), 246–285 (VADT…SPVK), and 289–332 (AHKT…NAAS). S325 carries the phosphoserine modification. The tract at residues 369–411 (QEKAGLPRSINTDTLSKETDSGKNQDFSSFDDTGKSSLGDMFS) is disordered. T382 carries the post-translational modification Phosphothreonine; by PLK1. Residue S397 is modified to Phosphoserine; by PLK1. Residue S411 is modified to Phosphoserine. S426 carries the phosphoserine; by PLK1 modification. Phosphoserine occurs at positions 468 and 516. The segment covering 507–523 (GAESGNLNTSPSSNQTR) has biased composition (polar residues). The disordered stretch occupies residues 507–532 (GAESGNLNTSPSSNQTRNSEKFEKPE). A Phosphothreonine; by CDK1 modification is found at T550. A Phosphoserine; by PLK1 modification is found at S637.

As to quaternary structure, interacts with FAM29A. Interacts with HSPA1A and HSPA1B. Interacts with gamma-tubulin in a HSPA1A/B-dependent manner. During mitosis, prior phosphorylation on Thr-550 by CDK1 promotes subsequent phosphorylation by PLK1 on Thr-382, Ser-397, Ser-426 and Ser-637. Phosphorylated NEDD1 can interact with gamma-tubulin for targeting the gamma-tubulin ring complex (gTuRC) to the centrosome, an important step for spindle formation.

The protein resides in the cytoplasm. It localises to the cytoskeleton. Its subcellular location is the microtubule organizing center. The protein localises to the centrosome. Required for mitosis progression. Promotes the nucleation of microtubules from the spindle. In Homo sapiens (Human), this protein is Protein NEDD1 (NEDD1).